The chain runs to 930 residues: Beta-mannosidase A (930 aa).

The N-terminal stretch at 1-21 (MHVKAETVLALLTPGLPSVVG) is a signal peptide. 5 N-linked (GlcNAc...) asparagine glycosylation sites follow: N62, N246, N281, N315, and N346. Catalysis depends on E478, which acts as the Proton donor. N536, N607, N630, N657, N737, N760, N782, N789, N797, N823, and N909 each carry an N-linked (GlcNAc...) asparagine glycan.

The protein belongs to the glycosyl hydrolase 2 family. Beta-mannosidase A subfamily. As to quaternary structure, homodimer.

It is found in the secreted. It carries out the reaction Hydrolysis of terminal, non-reducing beta-D-mannose residues in beta-D-mannosides.. Its pathway is glycan metabolism; N-glycan degradation. In terms of biological role, exoglycosidase that cleaves the single beta-linked mannose residue from the non-reducing end of beta-mannosidic oligosaccharides of various complexity and length. Involved in the degradation of polymeric mannan and galactomannan. This Neosartorya fischeri (strain ATCC 1020 / DSM 3700 / CBS 544.65 / FGSC A1164 / JCM 1740 / NRRL 181 / WB 181) (Aspergillus fischerianus) protein is Beta-mannosidase A (mndA).